We begin with the raw amino-acid sequence, 219 residues long: MIINNQNSPQSINTPSSVSSRQHINKSKKKKENVIKRMLIRLSNSNNRSLATVFGVIGGLVLGIVLVCKEYENFPLVGKGLPLVYRIVGIFLSAGTGGNLSSYIGGTIDIITGDKTVVDLYKSFKRYFKKVKDKNHRSPIPLTNLNNNNNNNNNNNNNNNNNNNNNNNNNNNNNNNNNNNSGGSGSTDNNNNNNEPIFSNNNSNNNNDNNSDLEIPIPI.

Positions 1-17 (MIINNQNSPQSINTPSS) are enriched in low complexity. The tract at residues 1-31 (MIINNQNSPQSINTPSSVSSRQHINKSKKKK) is disordered. The next 2 helical transmembrane spans lie at 49–69 (SLAT…LVCK) and 83–105 (LVYR…SYIG). The tract at residues 135 to 219 (NHRSPIPLTN…NSDLEIPIPI (85 aa)) is disordered. The segment covering 144 to 212 (NLNNNNNNNN…SNNNNDNNSD (69 aa)) has biased composition (low complexity).

It is found in the membrane. This is an uncharacterized protein from Dictyostelium discoideum (Social amoeba).